The primary structure comprises 284 residues: Bifunctional protein FolD 1 (284 aa).

NADP(+) is bound by residues 166–168 and Ile232; that span reads GAS.

It belongs to the tetrahydrofolate dehydrogenase/cyclohydrolase family. Homodimer.

The catalysed reaction is (6R)-5,10-methylene-5,6,7,8-tetrahydrofolate + NADP(+) = (6R)-5,10-methenyltetrahydrofolate + NADPH. It carries out the reaction (6R)-5,10-methenyltetrahydrofolate + H2O = (6R)-10-formyltetrahydrofolate + H(+). Its pathway is one-carbon metabolism; tetrahydrofolate interconversion. Its function is as follows. Catalyzes the oxidation of 5,10-methylenetetrahydrofolate to 5,10-methenyltetrahydrofolate and then the hydrolysis of 5,10-methenyltetrahydrofolate to 10-formyltetrahydrofolate. The protein is Bifunctional protein FolD 1 of Pseudomonas syringae pv. tomato (strain ATCC BAA-871 / DC3000).